A 562-amino-acid chain; its full sequence is MVTGATSLSLVRDELFATMEQAEQGLEQFIAERQNGSLLQHAVECLQQIRGTLNLIELAGAELLAQEALQLATDIPTGVSEERDGQLAALGNALYVLRRYLENVEANRQEIPELLLPAINEVRCAAGQPALPESFFFSARLDIPRPPSTAIDHLPSEAELGEESRRMRHMYQIGLLGLIREQNLYPSLKLMGRALARLDSLHGGVARSRLCWIGAAAIESIVDGQLLPRKSRKQLFSRIDRELKQLLIGPAYEAPRHLLKELLYLVALSDGQGPRSREVRELHGLAPLPFTDHLLEEESQRLSGPGQSVMRSLSTAIREELAGVKDMLDLIERGVAQPDSLTNLHAQLGKLSKTLGMVGLNSAGTALQTQLPTVAAWAASGVADSPPALLRLADAVLYVESMVGNLERGERRIIRPTPAEPGQEADAFAVHQLAEARIVVIEEAKAGLALAKRAITAYLESNGDKLNLANVPASLQAVRGGLWFLGQERAALLVGGCADYIQQRMIETAQMPSEQMLETLADALTSLEYYLEGGAVLRPQGQPDVLDLASASVKALGLPVAA.

In terms of assembly, interacts with PilG and FimV.

The protein resides in the cytoplasm. Its function is as follows. Regulates multiple virulence functions including type IV pilus (T4P)-mediated assembly and twitching motility as well as cAMP-dependent virulence gene expression. Regulates intracellular cyclic AMP (cAMP) levels through the activation of adenylate cyclase CyaB. Also functions as a scaffold linking FimV and PilG at the pole, where type IV pilus (T4P), the Chp chemosensory system and the CyaB adenylate cyclase interact. The polypeptide is Scaffold protein FimL (fimL) (Pseudomonas aeruginosa (strain ATCC 15692 / DSM 22644 / CIP 104116 / JCM 14847 / LMG 12228 / 1C / PRS 101 / PAO1)).